The following is a 492-amino-acid chain: UPF0236 protein TTE1650/TTE2708 (492 aa).

It belongs to the UPF0236 family.

In Caldanaerobacter subterraneus subsp. tengcongensis (strain DSM 15242 / JCM 11007 / NBRC 100824 / MB4) (Thermoanaerobacter tengcongensis), this protein is UPF0236 protein TTE1650/TTE2708.